A 178-amino-acid polypeptide reads, in one-letter code: Fatty-acid and retinol-binding protein 1 (178 aa).

Positions 1-16 (MYHRLILLALIGTTMA) are cleaved as a signal peptide. 2 coiled-coil regions span residues 67–89 (DAALEALKAKSDNLYKNAVELRN) and 130–153 (KQAARDIIAKYQALSEETKEELKV).

Belongs to the fatty-acid and retinol-binding protein (FARBP) family. Post-translationally, not glycosylated.

It is found in the secreted. Functionally, binds retinol and different fatty acids. The sequence is that of Fatty-acid and retinol-binding protein 1 from Wuchereria bancrofti.